Reading from the N-terminus, the 666-residue chain is Probable potassium transport system protein Kup (666 aa).

A run of 12 helical transmembrane segments spans residues 16–36 (GFIIALGIVYGDIGTSPLYTI), 58–78 (ISLIIWTLTLITTIKYVLIAL), 100–120 (PWLIIPAMIGGATLLSDGALT), 141–161 (IYQNQTNVIITTLVILIVLFG), 165–185 (FGTGFIGKIFGPVMFIWFSFL), 221–241 (IFILGSIFLATTGAEALYSDL), 253–273 (WPFVKMCIVLSYCGQAAWILA), 294–314 (VYLVSLATLAAIIASQALISG), 343–363 (LYIPVINWILFAVTSCTVLAF), 373–393 (YGLAITITMLMTTILLKYYLI), 399–419 (PILAHLVMAFFALVEFIFFLA), and 424–444 (FMHGGYAVVILALAIVFVMFI).

This sequence belongs to the HAK/KUP transporter (TC 2.A.72) family.

The protein localises to the cell membrane. It catalyses the reaction K(+)(in) + H(+)(in) = K(+)(out) + H(+)(out). In terms of biological role, transport of potassium into the cell. Likely operates as a K(+):H(+) symporter. The polypeptide is Probable potassium transport system protein Kup (Streptococcus pyogenes serotype M1).